Here is a 347-residue protein sequence, read N- to C-terminus: GMP reductase (347 aa).

Residue 108–131 participates in NADP(+) binding; it reads ADFQKTKDIMALTEDLIFICIDIA. K(+) contacts are provided by Gly-181 and Gly-183. Cys-186 acts as the Thioimidate intermediate in catalysis. 216-239 contributes to the NADP(+) binding site; that stretch reads IIGDGGCSCAGDVSKAFGGGADFV.

This sequence belongs to the IMPDH/GMPR family. GuaC type 1 subfamily. In terms of assembly, homotetramer.

The enzyme catalyses IMP + NH4(+) + NADP(+) = GMP + NADPH + 2 H(+). In terms of biological role, catalyzes the irreversible NADPH-dependent deamination of GMP to IMP. It functions in the conversion of nucleobase, nucleoside and nucleotide derivatives of G to A nucleotides, and in maintaining the intracellular balance of A and G nucleotides. This is GMP reductase from Photobacterium profundum (strain SS9).